The following is a 450-amino-acid chain: tRNA modification GTPase MnmE (450 aa).

Residues Arg23, Glu81, and Lys120 each contribute to the (6S)-5-formyl-5,6,7,8-tetrahydrofolate site. The 158-residue stretch at 216 to 373 (GIHLVLAGKP…LLKKIATLAG (158 aa)) folds into the TrmE-type G domain. GTP-binding positions include 226 to 231 (NAGKSS), 245 to 251 (TPQAGTT), 270 to 273 (DTAG), and 337 to 340 (NKAD). Mg(2+) contacts are provided by Ser230 and Thr251. Lys450 provides a ligand contact to (6S)-5-formyl-5,6,7,8-tetrahydrofolate.

The protein belongs to the TRAFAC class TrmE-Era-EngA-EngB-Septin-like GTPase superfamily. TrmE GTPase family. In terms of assembly, homodimer. Heterotetramer of two MnmE and two MnmG subunits. It depends on K(+) as a cofactor.

The protein localises to the cytoplasm. In terms of biological role, exhibits a very high intrinsic GTPase hydrolysis rate. Involved in the addition of a carboxymethylaminomethyl (cmnm) group at the wobble position (U34) of certain tRNAs, forming tRNA-cmnm(5)s(2)U34. This chain is tRNA modification GTPase MnmE, found in Dichelobacter nodosus (strain VCS1703A).